The primary structure comprises 2090 residues: Host cell factor 1 (2090 aa).

Ala-2 is modified (N-acetylalanine). Phosphoserine is present on Ser-6. Kelch repeat units follow at residues 44-89, 93-140, 148-194, 217-265, and 266-313; these read LIVV…GFVC, RLLV…RLGH, KCYL…ITYG, KLVI…TIGN, and KMYV…LMDT. Glycyl lysine isopeptide (Lys-Gly) (interchain with G-Cter in ubiquitin) cross-links involve residues Lys-105, Lys-163, and Lys-244. Residue Lys-282 forms a Glycyl lysine isopeptide (Lys-Gly) (interchain with G-Cter in SUMO2) linkage. Lys-288 is subject to N6-acetyllysine. Residue Lys-363 forms a Glycyl lysine isopeptide (Lys-Gly) (interchain with G-Cter in ubiquitin) linkage. Residues 366-469 form the Fibronectin type-III 1 domain; it reads PPARVQLVRA…TIQVLPTVPG (104 aa). The disordered stretch occupies residues 407–434; it reads ATATSPTPNPVPSVPANPPKSPAPAAAA. At Ser-411 the chain carries Phosphoserine. The span at 413–428 shows a compositional bias: pro residues; it reads TPNPVPSVPANPPKSP. A required for interaction with OGT region spans residues 500–550; sequence LVTMRPAGQAGKAPVTVTSLPASVRMVVPTQSAQGTVIGSNPQMSGMAALA. 2 positions are modified to omega-N-methylarginine: Arg-504 and Arg-524. Phosphoserine occurs at positions 598, 666, and 669. The segment at 610–722 is interaction with SIN3A; it reads LKTAAAQVGT…KGPLPAGTIL (113 aa). Residues 750–902 are interaction with ZBTB17; sequence ILGISSVSPS…SLAGAGAHST (153 aa). The residue at position 813 (Lys-813) is an N6-acetyllysine. The segment at 813–912 is interaction with GABP2; it reads KIITAVPKIA…SASLATPITT (100 aa). 3 HCF repeat repeats span residues 1010–1035, 1072–1097, and 1101–1126; these read TLVCSNPPCETHETGTTNTATTTVVA, VRVCSNPPCETHETGTTNTATTATSN, and QHGCSNPPCETHETGTTSTATTAMSS. Residues 1098–1140 are disordered; that stretch reads MAGQHGCSNPPCETHETGTTSTATTAMSSMGTGQQRDTRHTSS. The span at 1114–1130 shows a compositional bias: low complexity; sequence TGTTSTATTAMSSMGTG. One copy of the HCF repeat 4; degenerate repeat lies at 1157–1182; the sequence is TQGTVKPQCQTQQANMTNTTMTVQAT. Ser-1204 is subject to Phosphoserine. Arg-1216 carries the post-translational modification Asymmetric dimethylarginine. Ser-1223 is modified (phosphoserine). HCF repeat repeat units follow at residues 1295 to 1320 and 1323 to 1348; these read TQVCSNPPCETHETGTTNTATTSNAG and QRVCSNPPCETHETGTTHTATTATSN. Disordered stretches follow at residues 1302–1374 and 1444–1486; these read PCET…TTST and TVTS…TTVS. Positions 1308 to 1321 are enriched in low complexity; sequence TGTTNTATTSNAGS. Residues 1358–1383 form an HCF repeat 7; degenerate repeat; that stretch reads QQPAGGRPCETHQTTSTGTTMSVSVG. The stretch at 1423 to 1448 is one HCF repeat 8 repeat; sequence QRVCSNPPCETHETGTTHTATTVTSN. Over residues 1465 to 1475 the composition is skewed to polar residues; the sequence is VVSTQGDSANI. A compositionally biased stretch (low complexity) spans 1476–1486; it reads TSSSGITTTVS. Thr-1500 is modified (phosphothreonine). A phosphoserine mark is found at Ser-1506, Ser-1559, and Ser-1826. 2 Fibronectin type-III domains span residues 1853 to 1943 and 1945 to 2061; these read PPPP…TCLP and FPGA…TSKD. Residues Lys-1862 and Lys-1863 each participate in a glycyl lysine isopeptide (Lys-Gly) (interchain with G-Cter in ubiquitin) cross-link. Phosphoserine is present on Ser-1893. The segment at 2049 to 2090 is disordered; the sequence is ATQVRWLQETSKDSSGTKPASKRPMSSPEMKSAPKKSKADGQ. Lys-2060 carries the N6-acetyllysine modification. A Glycyl lysine isopeptide (Lys-Gly) (interchain with G-Cter in SUMO2) cross-link involves residue Lys-2079.

In terms of assembly, composed predominantly of six polypeptides ranging from 110 to 150 kDa and a minor 300 kDa polypeptide. The majority of N- and C-terminal cleavage products remain tightly, albeit non-covalently, associated. Interacts with POU2F1, CREB3, ZBTB17, EGR2, E2F4, CREBZF, SP1, GABP2, Sin3 HDAC complex (SIN3A, HDAC1, HDAC2, SUDS3), SAP30, SIN3B and FHL2. Component of a MLL1 complex, composed of at least the core components KMT2A/MLL1, ASH2L, HCFC1, WDR5 and RBBP5, as well as the facultative components BACC1, CHD8, DPY30, E2F6, HCFC2, HSP70, INO80C, KANSL1, LAS1L, MAX, MCRS1, MEN1, MGA, KAT8, PELP1, PHF20, PRP31, RING2, RUVBL1, RUVBL2, SENP3, TAF1, TAF4, TAF6, TAF7, TAF9 and TEX10. Component of a THAP1/THAP3-HCFC1-OGT complex that is required for the regulation of the transcriptional activity of RRM1. Interacts directly with THAP3 (via its HBM). Interacts (via the Kelch-repeat domain) with THAP1 (via the HBM); the interaction recruits HCHC1 to the RRM1. Interacts directly with OGT; the interaction, which requires the HCFC1 cleavage site domain, glycosylates and promotes the proteolytic processing of HCFC1 and retains OGT in the nucleus. Component of the SET1 complex, at least composed of the catalytic subunit (SETD1A or SETD1B), WDR5, WDR82, RBBP5, ASH2L, CXXC1, HCFC1 and DPY30. Component of the NSL complex at least composed of MOF/KAT8, KANSL1, KANSL2, KANSL3, MCRS1, PHF20, OGT1/OGT, WDR5 and HCFC1. Component of a complex at least composed of ZNF335, HCFC1, CCAR2, EMSY, MKI67, RBBP5, ASH2L and WDR5; the complex is formed as a result of interactions between components of a nuclear receptor-mediated transcription complex and a histone methylation complex. Within the complex interacts with ZNF335. Interacts with TET2 and TET3. Interacts with HCFC1R1. Interacts with THAP11. Interacts (via Kelch domain) with KMT2E (via HBM motif). Interacts with E2F1. Accessory scaffold component of the polycomb repressive deubiquitinase (PR-DUB) complex, at least composed of BAP1, one of ASXL1, ASXL2 or (probably) ASXL3 and one of MBD5 or MBD6; the PR-DUB core associates with a number of accessory proteins, including FOXK1, FOXK2, KDM1B, HCFC1, YY1 and OGT. Interacts with YY1 (via Gly-rich region); the interaction is direct. Interacts with BAP1 (via HBM-like motif). In terms of processing, proteolytically cleaved at one or several PPCE--THET sites within the HCF repeats. Cleavage is promoted by O-glycosylation. Further cleavage of the primary N- and C-terminal chains results in a 'trimming' and accumulation of the smaller chains. Cleavage is promoted by O-glycosylation. Post-translationally, O-glycosylated. GlcNAcylation by OGT promotes proteolytic processing. Ubiquitinated. Lys-1862 and Lys-1863 are ubiquitinated both via 'Lys-48'- and 'Lys-63'-linked polyubiquitin chains. BAP1 mediated deubiquitination of 'Lys-48'-linked polyubiquitin chains; deubiquitination by BAP1 does not seem to stabilize the protein.

The protein resides in the cytoplasm. It is found in the nucleus. Functionally, transcriptional coregulator. Serves as a scaffold protein, bridging interactions between transcription factors, including THAP11 and ZNF143, and transcriptional coregulators. Involved in control of the cell cycle. Also antagonizes transactivation by ZBTB17 and GABP2; represses ZBTB17 activation of the p15(INK4b) promoter and inhibits its ability to recruit p300. Coactivator for EGR2 and GABP2. Tethers the chromatin modifying Set1/Ash2 histone H3 'Lys-4' methyltransferase (H3K4me) and Sin3 histone deacetylase (HDAC) complexes (involved in the activation and repression of transcription respectively) together. As part of the NSL complex it may be involved in acetylation of nucleosomal histone H4 on several lysine residues. Recruits KMT2E to E2F1 responsive promoters promoting transcriptional activation and thereby facilitates G1 to S phase transition. Modulates expression of homeobox protein PDX1, perhaps acting in concert with transcription factor E2F1, thereby regulating pancreatic beta-cell growth and glucose-stimulated insulin secretion. May negatively modulate transcriptional activity of FOXO3. In Mesocricetus auratus (Golden hamster), this protein is Host cell factor 1.